The chain runs to 106 residues: BLOC-1-related complex subunit 7 (106 aa).

This sequence belongs to the BORCS7 family. Component of the BLOC-one-related complex (BORC) which is composed of BLOC1S1, BLOC1S2, BORCS5, BORCS6, BORCS7, BORCS8, KXD1 and SNAPIN.

Its subcellular location is the lysosome membrane. As part of the BORC complex may play a role in lysosomes movement and localization at the cell periphery. Associated with the cytosolic face of lysosomes, the BORC complex may recruit ARL8B and couple lysosomes to microtubule plus-end-directed kinesin motor. The chain is BLOC-1-related complex subunit 7 from Homo sapiens (Human).